The sequence spans 294 residues: Glyceraldehyde-3-phosphate dehydrogenase (294 aa).

3 residues coordinate NAD(+): D19, K63, and T105. Residues 134 to 136 (SCT), T165, 194 to 195 (TG), and R217 each bind D-glyceraldehyde 3-phosphate. The active-site Nucleophile is C135.

This sequence belongs to the glyceraldehyde-3-phosphate dehydrogenase family. Homotetramer.

The protein resides in the cytoplasm. The catalysed reaction is D-glyceraldehyde 3-phosphate + phosphate + NAD(+) = (2R)-3-phospho-glyceroyl phosphate + NADH + H(+). Its pathway is carbohydrate degradation; glycolysis; pyruvate from D-glyceraldehyde 3-phosphate: step 1/5. In terms of biological role, catalyzes the oxidative phosphorylation of glyceraldehyde 3-phosphate (G3P) to 1,3-bisphosphoglycerate (BPG) using the cofactor NAD. The first reaction step involves the formation of a hemiacetal intermediate between G3P and a cysteine residue, and this hemiacetal intermediate is then oxidized to a thioester, with concomitant reduction of NAD to NADH. The reduced NADH is then exchanged with the second NAD, and the thioester is attacked by a nucleophilic inorganic phosphate to produce BPG. This chain is Glyceraldehyde-3-phosphate dehydrogenase (gap), found in Serratia odorifera.